Consider the following 389-residue polypeptide: Tryptophan synthase beta chain 1 (389 aa).

N6-(pyridoxal phosphate)lysine is present on K84.

Belongs to the TrpB family. Tetramer of two alpha and two beta chains. Pyridoxal 5'-phosphate is required as a cofactor.

Its subcellular location is the plastid. It is found in the chloroplast. It carries out the reaction (1S,2R)-1-C-(indol-3-yl)glycerol 3-phosphate + L-serine = D-glyceraldehyde 3-phosphate + L-tryptophan + H2O. It functions in the pathway amino-acid biosynthesis; L-tryptophan biosynthesis; L-tryptophan from chorismate: step 5/5. Its function is as follows. The beta subunit is responsible for the synthesis of L-tryptophan from indole and L-serine. The protein is Tryptophan synthase beta chain 1 (TSB1) of Zea mays (Maize).